The primary structure comprises 141 residues: Large-conductance mechanosensitive channel (141 aa).

The next 2 membrane-spanning stretches (helical) occupy residues 16-36 (VVDL…VSSM) and 83-103 (GNFI…FLMV).

It belongs to the MscL family. As to quaternary structure, homopentamer.

It localises to the cell inner membrane. Its function is as follows. Channel that opens in response to stretch forces in the membrane lipid bilayer. May participate in the regulation of osmotic pressure changes within the cell. The polypeptide is Large-conductance mechanosensitive channel (Cytophaga hutchinsonii (strain ATCC 33406 / DSM 1761 / CIP 103989 / NBRC 15051 / NCIMB 9469 / D465)).